A 2039-amino-acid chain; its full sequence is Methylcytosine dioxygenase TET1 (2039 aa).

Residues 1–19 (MSRSRPAKPSKSVKTKLQK) are compositionally biased toward basic residues. Disordered stretches follow at residues 1 to 79 (MSRS…AGAA), 119 to 168 (VVTP…NGEQ), and 227 to 286 (DNEC…GFPD). Composition is skewed to basic and acidic residues over residues 53–65 (KRRDGKKETEDKT) and 138–149 (IQDEPGVKHSEN). Composition is skewed to polar residues over residues 150-168 (DSVPSQHATVSPGTENGEQ) and 241-265 (QRSTSEVTSQKNTSNQLADLSSQVE). The sufficient for binding to genomic CpG islands stretch occupies residues 512-657 (LDLTQGSQAA…NGPKSESMDC (146 aa)). A CXXC-type zinc finger spans residues 567–608 (ERRKRKACGVCEPCQQKANCGECTYCKNRKNSHQICKKRKCE). The Zn(2+) site is built by Cys-574, Cys-577, Cys-580, Cys-586, Cys-589, Cys-592, Cys-602, and Cys-607. 8 disordered regions span residues 613–670 (KPEA…QRLD), 711–735 (CDANLTGVENPQPSEDDKQQTNPSP), 820–859 (GAEPTIFNNHPNTHSAGSRPHPPEKVPNKEPKDGSPVQPS), 882–906 (QLSEAPSESSSPSKPEKDEEAHQKT), 964–993 (QGYPSSPTAEKKGAAGGRAPFDGFENSHPL), 1050–1129 (VRNA…KKQE), 1209–1240 (VEPSDSLPTCQFKTESGGQTFAEPADNSQGQP), and 1322–1341 (KREAQTSSNGPLGPTTDSAQ). Basic and acidic residues predominate over residues 653 to 670 (ESMDCSRRGHGEEEQRLD). Residues 825–835 (IFNNHPNTHSA) are compositionally biased toward polar residues. Positions 840–852 (HPPEKVPNKEPKD) are enriched in basic and acidic residues. A Phosphoserine modification is found at Ser-854. Residues 884 to 894 (SEAPSESSSPS) show a composition bias toward low complexity. Residues 895-904 (KPEKDEEAHQ) show a composition bias toward basic and acidic residues. Over residues 1053–1064 (AESTPESLVAKN) the composition is skewed to polar residues. Residues 1094-1116 (KPKKAQKKARATPHANKRKKKPP) show a composition bias toward basic residues. Composition is skewed to polar residues over residues 1214–1227 (SLPTCQFKTESGGQ) and 1326–1341 (QTSSNGPLGPTTDSAQ). Zn(2+) is bound by residues Cys-1371, Cys-1373, Cys-1430, His-1456, and Cys-1458. Residue Arg-1499 participates in 2-oxoglutarate binding. Residues Cys-1509, Cys-1511, Cys-1527, and Cys-1536 each coordinate Zn(2+). The tract at residues 1528 to 1541 (SWSMYFNGCKFGRS) is interaction with DNA. Lys-1537 is covalently cross-linked (Glycyl lysine isopeptide (Lys-Gly) (interchain with G-Cter in ubiquitin)). Residue Cys-1628 coordinates Zn(2+). Cys-1644 is a binding site for 2-oxoglutarate. His-1650 lines the Zn(2+) pocket. Fe cation-binding residues include His-1652 and Asp-1654. Residue Asn-1657 coordinates substrate. His-1685 is a 2-oxoglutarate binding site. Basic residues predominate over residues 1734-1743 (GKRAKMKQNH). Disordered regions lie at residues 1734–1760 (GKRAKMKQNHNKSGSHNTKSFSSASST) and 1830–1901 (AAHP…LPQL). Residues 1748–1760 (SHNTKSFSSASST) are compositionally biased toward low complexity. The segment covering 1850-1875 (TSPSEQLTSNQSNQQLPLLSNSQKLA) has biased composition (polar residues). Basic and acidic residues predominate over residues 1880–1895 (EDERHPEADEPQHPED). His-1939 serves as a coordination point for Fe cation. Position 1954–1956 (1954–1956 (RVS)) interacts with 2-oxoglutarate. 1960 to 1962 (YQH) provides a ligand contact to substrate. Residue His-1970 participates in Zn(2+) binding.

It belongs to the TET family. In terms of assembly, interacts with SIN3A; recruits the transcriptional co-repressor SIN3A to gene promoters. Interacts with HCFC1. Interacts (via C-terminus) with OGT. Found in a complex composed of at least SINHCAF, SIN3A, HDAC1, SAP30, RBBP4, OGT and TET1. Interacts with QSER1. Interacts with NONO (via DNA-binding domain); this interaction recruits TET1 to genomic loci. Interacts with FOXA2; this interaction may recruit TET1 to specific enhancers to preserve their unmethylated status and hence allowing gene expression. Interacts with RNF2. Directly interacts (via C-terminus) with the DCAF1 component of the CRL4(VprBP) E3 ubiquitin-protein ligase complex. Interacts with UHRF1; this interaction induces the recruitment of TET1 to replicating heterochromatin. Interacts with DCAF1. The cofactor is Fe(2+). Zn(2+) serves as cofactor. Glycosylated. Interaction with OGT leads to GlcNAcylation. Post-translationally, monoubiquitinated by the DCX (DDB1-CUL4-X-box) E3 ubiquitin-protein ligase complex called CRL4(VprBP) or CUL4A-RBX1-DDB1-DCAF1/VPRBP complex. In terms of processing, monoubiquitinated by the DCX (DDB1-CUL4-X-box) E3 ubiquitin-protein ligase complex called CRL4(VprBP) or CUL4A-RBX1-DDB1-DCAF1/VPRBP complex; this modification promotes binding to DNA. As to expression, expressed in germinal vesicle (GV) stage and MII-stage oocytes and in early embryos. Also detected somatic tissues, including brain, liver and kidney, but at very low levels. Predominantly expressed in early embryos. Also expressed in embryonic stem cells and in primordial germ cells. Expressed in adult tissues, including brain cortex, cerebellum, heart, kidney, liver, muscle and spleen, although at much lower levels than isoform 2. In the brain, expressed at higher levels in glial cells than in neurons. Expressed in placenta. Expressed in the pituitary, most probably in thyrotropes. In terms of tissue distribution, preferentially expressed in differentiated cells, including in cerebral cortex, cerebellum and thymus. Also expressed in heart, kidney, liver, muscle and spleen at much higher levels than isoform 1. In the brain, expressed at higher levels in neurons than in glial cells. Expressed in the olfactory bulb and in the mammary gland.

It is found in the nucleus. The protein localises to the chromosome. The catalysed reaction is a 5-methyl-2'-deoxycytidine in DNA + 2-oxoglutarate + O2 = a 5-hydroxymethyl-2'-deoxycytidine in DNA + succinate + CO2. It catalyses the reaction a 5-hydroxymethyl-2'-deoxycytidine in DNA + 2-oxoglutarate + O2 = a 5-formyl-2'-deoxycytidine in DNA + succinate + CO2 + H2O. The enzyme catalyses a 5-formyl-2'-deoxycytidine in DNA + 2-oxoglutarate + O2 = a 5-carboxyl-2'-deoxycytidine in DNA + succinate + CO2 + H(+). Functionally, dioxygenase that plays a key role in active DNA demethylation, by catalyzing the sequential oxidation of the modified genomic base 5-methylcytosine (5mC) into 5-hydroxymethylcytosine (5hmC), 5-formylcytosine (5fC), and 5-carboxylcytosine (5caC). In addition to its role in DNA demethylation, plays a more general role in chromatin regulation by recruiting histone modifying protein complexes to alter histone marks and chromatin accessibility, leading to both activation and repression of gene expression. Plays therefore a role in many biological processes, including stem cell maintenance, T- and B-cell development, inflammation regulation, iron homeostasis, neural activity or DNA repair. Involved in the balance between pluripotency and lineage commitment of cells it plays a role in embryonic stem cells maintenance and inner cell mass cell specification. Together with QSER1, plays an essential role in the protection and maintenance of transcriptional and developmental programs to inhibit the binding of DNMT3A/3B and therefore de novo methylation. May play a role in the pancreatic beta-cell specification during development. In this context, may function as an upstream epigenetic regulator of PAX4 presumably through direct recruitment by FOXA2 to a PAX4 enhancer to preserve its unmethylated status, thereby potentiating PAX4 expression to adopt beta-cell fate during endocrine lineage commitment. Under DNA hypomethylation conditions, such as in female meiotic germ cells, may induce epigenetic reprogramming of pericentromeric heterochromatin (PCH), the constitutive heterochromatin of pericentromeric regions. PCH forms chromocenters in the interphase nucleus and chromocenters cluster at the prophase of meiosis. In this context, may also be essential for chromocenter clustering in a catalytic activity-independent manner, possibly through the recruitment polycomb repressive complex 1 (PRC1) to the chromocenters. During embryonic development, may be required for normal meiotic progression in oocytes and meiotic gene activation. Binds preferentially to DNA containing cytidine-phosphate-guanosine (CpG) dinucleotides over CpH (H=A, T, and C), hemimethylated-CpG and hemimethylated-hydroxymethyl-CpG. In terms of biological role, dioxygenase that plays a key role in active DNA demethylation. Binds to promoters, particularly to those with high CG content. In hippocampal neurons, isoform 1 regulates the expression of a unique subset of genes compared to isoform 2, although some overlap between both isoforms, hence differentially regulates excitatory synaptic transmission. In hippocampal neuron cell cultures, isoform 1 controls both miniature excitatory postsynaptic current amplitude and frequency. Isoform 1 may regulate genes involved in hippocampal-dependent memory, leading to positive regulation of memory, contrary to isoform 2 that may decrease memory. Its function is as follows. Dioxygenase that plays a key role in active DNA demethylation. As isoform 1, binds to promoters, particularly to those with high CG content, however displays reduced global chromatin affinity compared with isoform 1, leading to decreased global DNA demethylation compared with isoform 1. Contrary to isoform 1, isoform 2 localizes during S phase to sites of ongoing DNA replication in heterochromatin, causing a significant de novo 5hmC formation, globally, and more so in heterochromatin, including LINE 1 interspersed DNA repeats leading to their activation. In hippocampal neurons, isoform 2 regulates the expression of a unique subset of genes compared with isoform 1, although some overlap between both isoforms, hence differentially regulating excitatory synaptic transmission. In hippocampal neuron cell cultures, isoform 2 controls miniature excitatory postsynaptic current frequency, but not amplitude. Isoform 2 may regulate genes involved in hippocampal-dependent memory, leading to negative regulation of memory, contrary to isoform 1 that may improve memory. In immature and partially differentiated gonadotrope cells, represses luteinizing hormone gene LHB expression directly and does not catalyze 5hmC at the gene promoter. The protein is Methylcytosine dioxygenase TET1 (Tet1) of Mus musculus (Mouse).